Reading from the N-terminus, the 264-residue chain is Glutamate racemase (264 aa).

Residues D10 to S11 and Y42 to G43 contribute to the substrate site. C73 acts as the Proton donor/acceptor in catalysis. N74–T75 lines the substrate pocket. C183 serves as the catalytic Proton donor/acceptor. T184–H185 serves as a coordination point for substrate.

This sequence belongs to the aspartate/glutamate racemases family. Homodimer.

The catalysed reaction is L-glutamate = D-glutamate. It participates in cell wall biogenesis; peptidoglycan biosynthesis. Functionally, provides the (R)-glutamate required for cell wall biosynthesis. The sequence is that of Glutamate racemase from Streptococcus pyogenes serotype M1.